A 487-amino-acid chain; its full sequence is UDP-N-acetylmuramate--L-alanine ligase (487 aa).

129 to 135 is a binding site for ATP; it reads GTHGKTT.

The protein belongs to the MurCDEF family.

The protein resides in the cytoplasm. It carries out the reaction UDP-N-acetyl-alpha-D-muramate + L-alanine + ATP = UDP-N-acetyl-alpha-D-muramoyl-L-alanine + ADP + phosphate + H(+). It functions in the pathway cell wall biogenesis; peptidoglycan biosynthesis. Its function is as follows. Cell wall formation. The polypeptide is UDP-N-acetylmuramate--L-alanine ligase (Aliivibrio fischeri (strain ATCC 700601 / ES114) (Vibrio fischeri)).